The sequence spans 198 residues: Twist-related protein 1 (198 aa).

Positions 1 to 18 (MMQDVSSSPVSPADDSLS) are enriched in low complexity. The tract at residues 1 to 101 (MMQDVSSSPV…GGGSPQSYEE (101 aa)) is disordered. Residues 34-43 (RGGRKRRSSR) show a composition bias toward basic residues. 2 stretches are compositionally biased toward gly residues: residues 46–64 (AGGG…GGDE) and 79–95 (GCGG…GGGS). One can recognise a bHLH domain in the interval 104-155 (TQRVMANVRERQRTQSLNEAFAALRKIIPTLPSDKLSKIQTLKLAARYIDFL). The interval 157–187 (QVLQSDELDSKMASCSYVAHERLSYAFSVWR) is sufficient for transactivation activity.

As to quaternary structure, efficient DNA binding requires dimerization with another bHLH protein. Homodimer or heterodimer with E proteins such as TCF3. ID1 binds preferentially to TCF3 but does not interact efficiently with TWIST1 so ID1 levels control the amount of TCF3 available to dimerize with TWIST and thus determine the type of dimer formed.

It localises to the nucleus. Its function is as follows. Acts as a transcriptional regulator. Inhibits myogenesis by sequestrating E proteins, inhibiting trans-activation by MEF2, and inhibiting DNA-binding by MYOD1 through physical interaction. This interaction probably involves the basic domains of both proteins. Also represses expression of pro-inflammatory cytokines such as TNFA and IL1B. Regulates cranial suture patterning and fusion. Activates transcription as a heterodimer with E proteins. Regulates gene expression differentially, depending on dimer composition. Homodimers induce expression of FGFR2 and POSTN while heterodimers repress FGFR2 and POSTN expression and induce THBS1 expression. Heterodimerization is also required for osteoblast differentiation. Represses the activity of the circadian transcriptional activator: NPAS2-BMAL1 heterodimer. This chain is Twist-related protein 1 (TWIST1), found in Eulemur fulvus fulvus (Brown lemur).